A 141-amino-acid chain; its full sequence is Aspartate 1-decarboxylase (141 aa).

The active-site Schiff-base intermediate with substrate; via pyruvic acid is S25. S25 is modified (pyruvic acid (Ser)). T57 contacts substrate. Residue Y58 is the Proton donor of the active site. Substrate is bound at residue 73–75; it reads GAA.

Belongs to the PanD family. Heterooctamer of four alpha and four beta subunits. Requires pyruvate as cofactor. In terms of processing, is synthesized initially as an inactive proenzyme, which is activated by self-cleavage at a specific serine bond to produce a beta-subunit with a hydroxyl group at its C-terminus and an alpha-subunit with a pyruvoyl group at its N-terminus.

It is found in the cytoplasm. The catalysed reaction is L-aspartate + H(+) = beta-alanine + CO2. The protein operates within cofactor biosynthesis; (R)-pantothenate biosynthesis; beta-alanine from L-aspartate: step 1/1. Functionally, catalyzes the pyruvoyl-dependent decarboxylation of aspartate to produce beta-alanine. This is Aspartate 1-decarboxylase from Salinispora arenicola (strain CNS-205).